Consider the following 124-residue polypeptide: Small ribosomal subunit protein uS13 (124 aa).

The interval 96–124 (LPVRGQRTKTNARTRKGPRRTVAGKKKAK) is disordered.

The protein belongs to the universal ribosomal protein uS13 family. In terms of assembly, part of the 30S ribosomal subunit. Forms a loose heterodimer with protein S19. Forms two bridges to the 50S subunit in the 70S ribosome.

Located at the top of the head of the 30S subunit, it contacts several helices of the 16S rRNA. In the 70S ribosome it contacts the 23S rRNA (bridge B1a) and protein L5 of the 50S subunit (bridge B1b), connecting the 2 subunits; these bridges are implicated in subunit movement. Contacts the tRNAs in the A and P-sites. This chain is Small ribosomal subunit protein uS13, found in Symbiobacterium thermophilum (strain DSM 24528 / JCM 14929 / IAM 14863 / T).